The primary structure comprises 647 residues: Glutamyl-tRNA(Gln) amidotransferase subunit B, mitochondrial (647 aa).

The segment at 87 to 106 (QAKALKKSGHKKKKSSDNQT) is disordered. Over residues 90-100 (ALKKSGHKKKK) the composition is skewed to basic residues.

The protein belongs to the GatB/GatE family. GatB subfamily. In terms of assembly, subunit of the heterotrimeric GatCAB amidotransferase (AdT) complex, composed of A, B and C subunits.

The protein localises to the mitochondrion. It carries out the reaction L-glutamyl-tRNA(Gln) + L-glutamine + ATP + H2O = L-glutaminyl-tRNA(Gln) + L-glutamate + ADP + phosphate + H(+). Allows the formation of correctly charged Gln-tRNA(Gln) through the transamidation of misacylated Glu-tRNA(Gln) in the mitochondria. The reaction takes place in the presence of glutamine and ATP through an activated gamma-phospho-Glu-tRNA(Gln). The chain is Glutamyl-tRNA(Gln) amidotransferase subunit B, mitochondrial from Neurospora crassa (strain ATCC 24698 / 74-OR23-1A / CBS 708.71 / DSM 1257 / FGSC 987).